The primary structure comprises 1268 residues: SR-related and CTD-associated factor 8 (1268 aa).

The CID domain maps to 1–139; sequence MEAVKTFNSE…PLLDMAAGIP (139 aa). Threonine 6 carries the phosphothreonine modification. Lysine 18 is covalently cross-linked (Glycyl lysine isopeptide (Lys-Gly) (interchain with G-Cter in SUMO1)). The span at 270–283 shows a compositional bias: basic and acidic residues; the sequence is GEDSEHSEESKKEM. Disordered stretches follow at residues 270–290, 322–355, and 385–469; these read GEDS…QLSH, QQQP…QQHF, and EIFE…PVRS. Serine 273 is subject to Phosphoserine. A compositionally biased stretch (polar residues) spans 327–354; the sequence is KVTPQDSQEGTFGSEHSASPSQGSSQQH. Over residues 394–443 the composition is skewed to basic residues; the sequence is VAVRSRSRTHSRSRSRSPRKRRSRSRSGSRKRKHRKRSRSHSREKKRKAS. The span at 447 to 461 shows a compositional bias: basic and acidic residues; that stretch reads SSERRAREREKERQK. Positions 477 to 551 constitute an RRM domain; sequence TTLWVGQVDK…KVIKIAWALN (75 aa). A Phosphoserine modification is found at serine 617. The tract at residues 776–807 is disordered; it reads QIPSGENTRPVIPSDIPSSAAMLAQPPGASST. An asymmetric dimethylarginine mark is found at arginine 915, arginine 925, and arginine 936. Disordered stretches follow at residues 984–1012 and 1040–1065; these read PGRP…EGDR and RLDP…PVDM. An Asymmetric dimethylarginine modification is found at arginine 1071. The interval 1199-1268 is disordered; sequence ATSQRKGDNV…VVESTETEGT (70 aa). Over residues 1249–1262 the composition is skewed to low complexity; sequence GTVAGVESEAVVES.

As to quaternary structure, interacts with POLR2A; via C-terminal heptapeptide repeat domain (CTD) phosphorylated at 'Ser-2' and 'Ser-5'. Identified in a complex with CDC5L and other spliceosomal proteins.

Its subcellular location is the nucleus. It localises to the nucleus matrix. Functionally, anti-terminator protein required to prevent early mRNA termination during transcription. Together with SCAF4, acts by suppressing the use of early, alternative poly(A) sites, thereby preventing the accumulation of non-functional truncated proteins. Mechanistically, associates with the phosphorylated C-terminal heptapeptide repeat domain (CTD) of the largest RNA polymerase II subunit (POLR2A), and subsequently binds nascent RNA upstream of early polyadenylation sites to prevent premature mRNA transcript cleavage and polyadenylation. Independently of SCAF4, also acts as a positive regulator of transcript elongation. The polypeptide is SR-related and CTD-associated factor 8 (Mus musculus (Mouse)).